Consider the following 333-residue polypeptide: Phosphate acyltransferase (333 aa).

It belongs to the PlsX family. Homodimer. Probably interacts with PlsY.

It localises to the cytoplasm. It carries out the reaction a fatty acyl-[ACP] + phosphate = an acyl phosphate + holo-[ACP]. It participates in lipid metabolism; phospholipid metabolism. Its function is as follows. Catalyzes the reversible formation of acyl-phosphate (acyl-PO(4)) from acyl-[acyl-carrier-protein] (acyl-ACP). This enzyme utilizes acyl-ACP as fatty acyl donor, but not acyl-CoA. This Lactobacillus johnsonii (strain CNCM I-12250 / La1 / NCC 533) protein is Phosphate acyltransferase.